Consider the following 981-residue polypeptide: Beta-glucuronidase (981 aa).

The active-site Nucleophile is the E500. Mg(2+)-binding residues include N561, W562, I563, S581, and E583.

The protein belongs to the glycosyl hydrolase 2 family.

It localises to the periplasm. The catalysed reaction is a beta-D-glucuronoside + H2O = D-glucuronate + an alcohol. In terms of biological role, beta-glucuronidase involved in ulvan degradation. Ulvan is the main polysaccharide component of the Ulvales (green seaweed) cell wall. It is composed of disaccharide building blocks comprising 3-sulfated rhamnose (Rha3S) linked to D-glucuronic acid (GlcA), L-iduronic acid (IduA), or D-xylose (Xyl). Beta-glucuronidase removes GlcA side chains present on some O2 residues of Rha3S. Can remove the GlcA side chains from polymeric ulvan or from smaller oligomers. This chain is Beta-glucuronidase, found in Formosa agariphila (strain DSM 15362 / KCTC 12365 / LMG 23005 / KMM 3901 / M-2Alg 35-1).